A 260-amino-acid chain; its full sequence is Pyridoxine 5'-phosphate synthase (260 aa).

Residues asparagine 10 and arginine 21 each contribute to the 3-amino-2-oxopropyl phosphate site. Catalysis depends on histidine 46, which acts as the Proton acceptor. 2 residues coordinate 1-deoxy-D-xylulose 5-phosphate: arginine 48 and histidine 53. The active-site Proton acceptor is glutamate 76. Threonine 113 is a 1-deoxy-D-xylulose 5-phosphate binding site. Histidine 204 functions as the Proton donor in the catalytic mechanism. 3-amino-2-oxopropyl phosphate contacts are provided by residues aspartate 205 and 227–228 (GH).

The protein belongs to the PNP synthase family. As to quaternary structure, homooctamer; tetramer of dimers.

It localises to the cytoplasm. It catalyses the reaction 3-amino-2-oxopropyl phosphate + 1-deoxy-D-xylulose 5-phosphate = pyridoxine 5'-phosphate + phosphate + 2 H2O + H(+). It participates in cofactor biosynthesis; pyridoxine 5'-phosphate biosynthesis; pyridoxine 5'-phosphate from D-erythrose 4-phosphate: step 5/5. Catalyzes the complicated ring closure reaction between the two acyclic compounds 1-deoxy-D-xylulose-5-phosphate (DXP) and 3-amino-2-oxopropyl phosphate (1-amino-acetone-3-phosphate or AAP) to form pyridoxine 5'-phosphate (PNP) and inorganic phosphate. The sequence is that of Pyridoxine 5'-phosphate synthase from Xylella fastidiosa (strain M23).